We begin with the raw amino-acid sequence, 137 residues long: MMSFGSFVYIACLLLNGANMLLQIFCVIMFSDLEMDYINPIDLCNKLNDLVMPEIISHTLVTLLLLLGKKWLLFLANLPLLVFHANQVIHKTHILDATEIFRQLGRHKRDNFIKVTFYLIMFFTLLYCMVMSLIQEE.

Residues 1–9 lie on the Cytoplasmic side of the membrane; it reads MMSFGSFVY. Residues 10 to 30 traverse the membrane as a helical segment; it reads IACLLLNGANMLLQIFCVIMF. The Extracellular segment spans residues 31-62; sequence SDLEMDYINPIDLCNKLNDLVMPEIISHTLVT. A helical transmembrane segment spans residues 63–83; it reads LLLLLGKKWLLFLANLPLLVF. The Cytoplasmic segment spans residues 84–114; it reads HANQVIHKTHILDATEIFRQLGRHKRDNFIK. The chain crosses the membrane as a helical span at residues 115 to 135; that stretch reads VTFYLIMFFTLLYCMVMSLIQ. The Extracellular portion of the chain corresponds to 136-137; the sequence is EE.

Belongs to the cornichon family.

Its subcellular location is the endoplasmic reticulum. The protein localises to the membrane. It localises to the golgi apparatus membrane. In terms of biological role, regulates export of the secretory proteins from the endoplasmic reticulum in COPII-coated vesicles. This Schizosaccharomyces pombe (strain 972 / ATCC 24843) (Fission yeast) protein is ER-derived vesicles protein erv14 (erv14).